Here is a 797-residue protein sequence, read N- to C-terminus: LPS-assembly protein LptD (797 aa).

The N-terminal stretch at 1 to 30 (MKEGRKRLRAGYCYMLAGVVGVASTGSSRA) is a signal peptide.

This sequence belongs to the LptD family. Component of the lipopolysaccharide transport and assembly complex. Interacts with LptE and LptA.

It localises to the cell outer membrane. Together with LptE, is involved in the assembly of lipopolysaccharide (LPS) at the surface of the outer membrane. The sequence is that of LPS-assembly protein LptD from Hahella chejuensis (strain KCTC 2396).